We begin with the raw amino-acid sequence, 240 residues long: SURF1-like protein (240 aa).

2 helical membrane-spanning segments follow: residues 7-23 and 201-219; these read VFIT…WQLS and YALT…YVIY.

This sequence belongs to the SURF1 family.

It localises to the cell membrane. This chain is SURF1-like protein, found in Rickettsia conorii (strain ATCC VR-613 / Malish 7).